Reading from the N-terminus, the 190-residue chain is Nucleoside triphosphate pyrophosphatase (190 aa).

The Proton acceptor role is filled by Asp-69.

This sequence belongs to the Maf family. The cofactor is a divalent metal cation.

It localises to the cytoplasm. It carries out the reaction a ribonucleoside 5'-triphosphate + H2O = a ribonucleoside 5'-phosphate + diphosphate + H(+). It catalyses the reaction a 2'-deoxyribonucleoside 5'-triphosphate + H2O = a 2'-deoxyribonucleoside 5'-phosphate + diphosphate + H(+). Its function is as follows. Nucleoside triphosphate pyrophosphatase. May have a dual role in cell division arrest and in preventing the incorporation of modified nucleotides into cellular nucleic acids. This chain is Nucleoside triphosphate pyrophosphatase, found in Helicobacter pylori (strain J99 / ATCC 700824) (Campylobacter pylori J99).